A 171-amino-acid chain; its full sequence is Adenine phosphoribosyltransferase (171 aa).

It belongs to the purine/pyrimidine phosphoribosyltransferase family. As to quaternary structure, homodimer.

It is found in the cytoplasm. The catalysed reaction is AMP + diphosphate = 5-phospho-alpha-D-ribose 1-diphosphate + adenine. Its pathway is purine metabolism; AMP biosynthesis via salvage pathway; AMP from adenine: step 1/1. In terms of biological role, catalyzes a salvage reaction resulting in the formation of AMP, that is energically less costly than de novo synthesis. The chain is Adenine phosphoribosyltransferase from Gloeobacter violaceus (strain ATCC 29082 / PCC 7421).